The sequence spans 448 residues: Glutamate--tRNA ligase 2 (448 aa).

Positions 9–19 (PSPTGKLHIGN) match the 'HIGH' region motif. The 'KMSKS' region signature appears at 240 to 244 (KISKR). Lys-243 serves as a coordination point for ATP.

This sequence belongs to the class-I aminoacyl-tRNA synthetase family. Glutamate--tRNA ligase type 1 subfamily. As to quaternary structure, monomer.

Its subcellular location is the cytoplasm. It catalyses the reaction tRNA(Glu) + L-glutamate + ATP = L-glutamyl-tRNA(Glu) + AMP + diphosphate. Functionally, catalyzes the attachment of glutamate to tRNA(Glu) in a two-step reaction: glutamate is first activated by ATP to form Glu-AMP and then transferred to the acceptor end of tRNA(Glu). The sequence is that of Glutamate--tRNA ligase 2 from Orientia tsutsugamushi (strain Boryong) (Rickettsia tsutsugamushi).